The primary structure comprises 469 residues: Adenosylhomocysteinase (469 aa).

Substrate is bound by residues Thr60, Asp135, and Glu195. Residue 196–198 participates in NAD(+) binding; sequence TTT. Substrate is bound by residues Lys225 and Asp229. Residues Asn230, 259–264, Glu282, Asn317, 338–340, and Asn383 contribute to the NAD(+) site; these read GYGDVG and IGH.

This sequence belongs to the adenosylhomocysteinase family. NAD(+) is required as a cofactor.

It is found in the cytoplasm. It catalyses the reaction S-adenosyl-L-homocysteine + H2O = L-homocysteine + adenosine. Its pathway is amino-acid biosynthesis; L-homocysteine biosynthesis; L-homocysteine from S-adenosyl-L-homocysteine: step 1/1. In terms of biological role, may play a key role in the regulation of the intracellular concentration of adenosylhomocysteine. In Maricaulis maris (strain MCS10) (Caulobacter maris), this protein is Adenosylhomocysteinase.